The following is a 148-amino-acid chain: Large ribosomal subunit protein bL9 (148 aa).

It belongs to the bacterial ribosomal protein bL9 family.

In terms of biological role, binds to the 23S rRNA. The protein is Large ribosomal subunit protein bL9 of Pseudomonas syringae pv. tomato (strain ATCC BAA-871 / DC3000).